Consider the following 179-residue polypeptide: Acireductone dioxygenase (179 aa).

Fe(2+) contacts are provided by H99, H101, E105, and H144. Ni(2+) contacts are provided by H99, H101, E105, and H144.

This sequence belongs to the acireductone dioxygenase (ARD) family. Monomer. Fe(2+) is required as a cofactor. Ni(2+) serves as cofactor.

It catalyses the reaction 1,2-dihydroxy-5-(methylsulfanyl)pent-1-en-3-one + O2 = 3-(methylsulfanyl)propanoate + CO + formate + 2 H(+). The catalysed reaction is 1,2-dihydroxy-5-(methylsulfanyl)pent-1-en-3-one + O2 = 4-methylsulfanyl-2-oxobutanoate + formate + 2 H(+). The protein operates within amino-acid biosynthesis; L-methionine biosynthesis via salvage pathway; L-methionine from S-methyl-5-thio-alpha-D-ribose 1-phosphate: step 5/6. Catalyzes 2 different reactions between oxygen and the acireductone 1,2-dihydroxy-3-keto-5-methylthiopentene (DHK-MTPene) depending upon the metal bound in the active site. Fe-containing acireductone dioxygenase (Fe-ARD) produces formate and 2-keto-4-methylthiobutyrate (KMTB), the alpha-ketoacid precursor of methionine in the methionine recycle pathway. Ni-containing acireductone dioxygenase (Ni-ARD) produces methylthiopropionate, carbon monoxide and formate, and does not lie on the methionine recycle pathway. The protein is Acireductone dioxygenase of Exiguobacterium sibiricum (strain DSM 17290 / CCUG 55495 / CIP 109462 / JCM 13490 / 255-15).